The sequence spans 469 residues: ATP synthase subunit beta (469 aa).

Position 155 to 162 (155 to 162) interacts with ATP; that stretch reads GGAGVGKT.

The protein belongs to the ATPase alpha/beta chains family. As to quaternary structure, F-type ATPases have 2 components, CF(1) - the catalytic core - and CF(0) - the membrane proton channel. CF(1) has five subunits: alpha(3), beta(3), gamma(1), delta(1), epsilon(1). CF(0) has three main subunits: a(1), b(2) and c(9-12). The alpha and beta chains form an alternating ring which encloses part of the gamma chain. CF(1) is attached to CF(0) by a central stalk formed by the gamma and epsilon chains, while a peripheral stalk is formed by the delta and b chains.

Its subcellular location is the cell inner membrane. The enzyme catalyses ATP + H2O + 4 H(+)(in) = ADP + phosphate + 5 H(+)(out). Its function is as follows. Produces ATP from ADP in the presence of a proton gradient across the membrane. The catalytic sites are hosted primarily by the beta subunits. The protein is ATP synthase subunit beta of Helicobacter pylori (strain ATCC 700392 / 26695) (Campylobacter pylori).